The chain runs to 372 residues: Probable peptidoglycan glycosyltransferase FtsW (372 aa).

Over 1–12 (MQKKSTISWSYD) the chain is Cytoplasmic. A helical transmembrane segment spans residues 13-33 (AWIVICTLSLLALGLLMVASA). Over 34-45 (SMVISDRQFGYP) the chain is Periplasmic. A helical membrane pass occupies residues 46-66 (FHYFIRHLIYLSLGLTLAWVA). The Cytoplasmic portion of the chain corresponds to 67–77 (SRVPIKVWKTY). Residues 78–98 (SGYLFLVGFLLLILVLAPVIG) form a helical membrane-spanning segment. Residues 99-109 (KTVNGSRRWIQ) lie on the Periplasmic side of the membrane. A helical transmembrane segment spans residues 110–130 (LGFISLQVSEVVKFVTILYLA). Residues 131 to 142 (SFLQRYQSEVQK) are Cytoplasmic-facing. The chain crosses the membrane as a helical span at residues 143 to 163 (ELKGFLKPMLLVGILSGLLLL). Residues 164-165 (EP) are Periplasmic-facing. Residues 166 to 186 (DFGAAVVITMTCLALLFLAGV) traverse the membrane as a helical segment. Position 187 (R187) is a topological domain, cytoplasmic. Residues 188–208 (LWPFCVLLVLVAGSLILLAIL) traverse the membrane as a helical segment. Over 209–277 (SPYRLQRLTS…LFAVLAEELG (69 aa)) the chain is Periplasmic. Residues 278-298 (LIGEILLMGLFVLLIGRIILI) form a helical membrane-spanning segment. Residues 299 to 315 (GRRAENSNQLYSAYLAY) lie on the Cytoplasmic side of the membrane. A helical transmembrane segment spans residues 316–336 (GIALWLGLQVIINIGVTAGVL). At 337 to 342 (PTKGLT) the chain is on the periplasmic side. A helical transmembrane segment spans residues 343-363 (LPFISYGGSSLLMNCLAIGVI). Topologically, residues 364–372 (LRIAYETEN) are cytoplasmic.

Belongs to the SEDS family. FtsW subfamily.

It localises to the cell inner membrane. The catalysed reaction is [GlcNAc-(1-&gt;4)-Mur2Ac(oyl-L-Ala-gamma-D-Glu-L-Lys-D-Ala-D-Ala)](n)-di-trans,octa-cis-undecaprenyl diphosphate + beta-D-GlcNAc-(1-&gt;4)-Mur2Ac(oyl-L-Ala-gamma-D-Glu-L-Lys-D-Ala-D-Ala)-di-trans,octa-cis-undecaprenyl diphosphate = [GlcNAc-(1-&gt;4)-Mur2Ac(oyl-L-Ala-gamma-D-Glu-L-Lys-D-Ala-D-Ala)](n+1)-di-trans,octa-cis-undecaprenyl diphosphate + di-trans,octa-cis-undecaprenyl diphosphate + H(+). Its pathway is cell wall biogenesis; peptidoglycan biosynthesis. In terms of biological role, peptidoglycan polymerase that is essential for cell division. This chain is Probable peptidoglycan glycosyltransferase FtsW, found in Coxiella burnetii (strain RSA 493 / Nine Mile phase I).